Consider the following 190-residue polypeptide: Negative regulator YfiR (190 aa).

Position 60 (R60) interacts with GMP. Disulfide bonds link C71–C110 and C145–C152. Residues R175 and H177 each coordinate GMP.

As to quaternary structure, homodimer. Interacts with TpbB/YfiN. Interacts with YfiB. The YfiB-YfiR complex is a 2:2 heterotetramer. In terms of processing, cys-71 and Cys-110 form a disulfide bond in the oxidized form but maintain their free form in the non-oxidized YfiR structure. The Cys-145-Cys-152 disulfide bond is well formed in both structures. The Cys145-Cys152 disulfide bond, but not Cys-71-Cys-110, plays an important role in maintaining the correct folding of the protein.

The protein localises to the periplasm. With respect to regulation, tpbB/YfiN repression is released through an YfiB-dependent sequestration of YfiR to the outer membrane. Binds vitamin B6 (VB6) or L-Trp at the periphery of the dimer, and both VB6 and L-Trp are able to reduce biofilm formation induced by YfiB L43P mutant. However, VB6 or L-Trp alone may have little effects in interrupting the YfiB-YfiR interaction. GMP enhances the binding affinity between YfiB and YfiR. Functionally, negatively regulates the activity of the diguanylate cyclase TpbB/YfiN, leading to decreased c-di-GMP production. Inhibits TpbB/YfiN allosterically, through a hydrophobic interaction between the C-terminus of YfiR and a conserved region of the periplasmic PAS domain of TpbB/YfiN. Under reducing conditions, may also act as an YfiB-independent sensing device that is able to activate TpbB/YfiN in response to the redox status of the periplasm. Part of the YfiB-TpbB-YfiR (or yfiBNR) system, encoding a tripartite signaling module that modulates intracellular c-di-GMP levels. The system is a key regulator of the small colony variant (SCV) phenotype, and plays an important role in biofilm formation and in vivo persistence. The c-di-GMP produced by TpbB/YfiN stimulates the production of the Pel and Psl exopolysaccharides, which promotes surface attachment, generates an SCV phenotype and confers resistance against phagocytosis. The sequence is that of Negative regulator YfiR from Pseudomonas aeruginosa (strain ATCC 15692 / DSM 22644 / CIP 104116 / JCM 14847 / LMG 12228 / 1C / PRS 101 / PAO1).